The sequence spans 165 residues: ATP synthase subunit b (165 aa).

The helical transmembrane segment at 10–30 (LIFWMLLSFGIVFAVLAKYGF) threads the bilayer.

It belongs to the ATPase B chain family. In terms of assembly, F-type ATPases have 2 components, F(1) - the catalytic core - and F(0) - the membrane proton channel. F(1) has five subunits: alpha(3), beta(3), gamma(1), delta(1), epsilon(1). F(0) has three main subunits: a(1), b(2) and c(10-14). The alpha and beta chains form an alternating ring which encloses part of the gamma chain. F(1) is attached to F(0) by a central stalk formed by the gamma and epsilon chains, while a peripheral stalk is formed by the delta and b chains.

The protein resides in the cell inner membrane. F(1)F(0) ATP synthase produces ATP from ADP in the presence of a proton or sodium gradient. F-type ATPases consist of two structural domains, F(1) containing the extramembraneous catalytic core and F(0) containing the membrane proton channel, linked together by a central stalk and a peripheral stalk. During catalysis, ATP synthesis in the catalytic domain of F(1) is coupled via a rotary mechanism of the central stalk subunits to proton translocation. In terms of biological role, component of the F(0) channel, it forms part of the peripheral stalk, linking F(1) to F(0). The protein is ATP synthase subunit b of Bacteroides fragilis (strain ATCC 25285 / DSM 2151 / CCUG 4856 / JCM 11019 / LMG 10263 / NCTC 9343 / Onslow / VPI 2553 / EN-2).